Here is an 862-residue protein sequence, read N- to C-terminus: Cone cGMP-specific 3',5'-cyclic phosphodiesterase subunit alpha' (862 aa).

GAF domains lie at 75-224 (SMEK…SLVL) and 256-433 (DIER…GWSV). Residues serine 97, asparagine 116, 169–172 (DKKT), and threonine 176 contribute to the 3',5'-cyclic GMP site. One can recognise a PDEase domain in the interval 486-819 (DEKDLIRILK…VEWKTRADEY (334 aa)). The active-site Proton donor is histidine 562. 4 residues coordinate a divalent metal cation: histidine 566, histidine 602, aspartate 603, and aspartate 723. Basic and acidic residues predominate over residues 830–842 (KKKEEEAAAKKAE). Residues 830–862 (KKKEEEAAAKKAENAAGGGGGGEDGKSKTCIVL) form a disordered region. The residue at position 859 (cysteine 859) is a Cysteine methyl ester. Cysteine 859 is lipidated: S-geranylgeranyl cysteine. Residues 860 to 862 (IVL) constitute a propeptide, removed in mature form.

Belongs to the cyclic nucleotide phosphodiesterase family. In terms of assembly, composed of two alpha' subunits that are associated with 3 smaller proteins of 11, 13, and 15 kDa. A divalent metal cation is required as a cofactor.

It is found in the cell membrane. The catalysed reaction is 3',5'-cyclic GMP + H2O = GMP + H(+). In terms of biological role, as cone-specific cGMP phosphodiesterase, it plays an essential role in light detection and cone phototransduction by rapidly decreasing intracellular levels of cGMP. The protein is Cone cGMP-specific 3',5'-cyclic phosphodiesterase subunit alpha' (PDE6C) of Gallus gallus (Chicken).